The sequence spans 251 residues: Lactose phosphotransferase system repressor (251 aa).

The HTH deoR-type domain maps to 3–58 (KHERLDEIAKLVNKKGTIRTNEIVEGLNVSDMTVRRDLIELENKGILTKIHGGARS). Positions 20-39 (IRTNEIVEGLNVSDMTVRRD) form a DNA-binding region, H-T-H motif.

Its function is as follows. Repressor of the lactose catabolism operon. Galactose-6-phosphate is the inducer. This Staphylococcus aureus (strain MRSA252) protein is Lactose phosphotransferase system repressor (lacR).